The chain runs to 211 residues: Large ribosomal subunit protein uL3 (211 aa).

Residue glutamine 150 is modified to N5-methylglutamine.

It belongs to the universal ribosomal protein uL3 family. Part of the 50S ribosomal subunit. Forms a cluster with proteins L14 and L19. In terms of processing, methylated by PrmB.

In terms of biological role, one of the primary rRNA binding proteins, it binds directly near the 3'-end of the 23S rRNA, where it nucleates assembly of the 50S subunit. In Pseudomonas aeruginosa (strain LESB58), this protein is Large ribosomal subunit protein uL3.